The following is a 147-amino-acid chain: Hemoglobin subunit gamma (147 aa).

Positions asparagine 3–histidine 147 constitute a Globin domain. Positions 64 and 93 each coordinate heme b.

This sequence belongs to the globin family. In terms of assembly, heterotetramer of two alpha chains and two gamma chains in fetal hemoglobin (Hb F). In terms of tissue distribution, red blood cells.

Gamma chains make up the fetal hemoglobin F, in combination with alpha chains. The polypeptide is Hemoglobin subunit gamma (HBG) (Alouatta belzebul (Red-handed howler monkey)).